We begin with the raw amino-acid sequence, 669 residues long: Protein fem-1 homolog A (669 aa).

7 ANK repeats span residues 2–31 (DLRT…REEL), 40–70 (GGGT…SVEA), 82–111 (EGAP…SVNR), 115–145 (TNST…DLEV), 149–178 (HGHT…QVNR), 182–211 (KGNT…RMER), and 214–243 (YGMT…GQEQ). S108 carries the post-translational modification Phosphoserine. The interval 240 to 278 (GQEQVAGGEAQPGLPQEDPSTSQGCAQPQGAPCCSSSPE) is disordered. TPR repeat units follow at residues 298–332 (VEAL…RHQG) and 390–423 (SYYI…QQSN). ANK repeat units lie at residues 534–576 (NGFT…DPDS) and 580–609 (DNNT…HMDA).

This sequence belongs to the fem-1 family. In terms of assembly, component of a CRL2 E3 ubiquitin-protein ligase complex, also named ECS (Elongin BC-CUL2/5-SOCS-box protein) complex, composed of CUL2, Elongin BC (ELOB and ELOC), RBX1 and substrate-specific adapter FEM1A. Interacts with PTGER4. Interacts with NFKB1; the interaction is direct. In terms of processing, phosphorylated; highly phosphorylated in myoblasts and myotubes. Phosphorylation at Ser-108 promotes PGE2-EP4-mediated inhibition of inflammation. Dephosphorylated by protein phosphatase 2A (PP2A). Present in macrophages derived from peripheral blood monocytes. Also present in atheromata (at protein level).

It localises to the mitochondrion. The protein resides in the cytoplasm. It functions in the pathway protein modification; protein ubiquitination. Functionally, substrate-recognition component of a Cul2-RING (CRL2) E3 ubiquitin-protein ligase complex of the DesCEND (destruction via C-end degrons) pathway, which recognizes a C-degron located at the extreme C terminus of target proteins, leading to their ubiquitination and degradation. The C-degron recognized by the DesCEND pathway is usually a motif of less than ten residues and can be present in full-length proteins, truncated proteins or proteolytically cleaved forms. The CRL2(FEM1A) complex specifically recognizes proteins with an arginine at the C-terminus: recognizes and binds proteins ending with -Lys/Arg-Xaa-Arg and -Lys/Arg-Xaa-Xaa-Arg C-degrons, such as SIL1 or OR51B2, leading to their ubiquitination and degradation. Promotes ubiquitination and degradation of SLBP. Involved in PGE2-EP4-mediated inhibition of inflammation of macrophages via interaction with NFKB1 and PTGER4. Promotes inflammation in brain microglia through MAP2K4/MKK4-mediated signaling. This is Protein fem-1 homolog A from Homo sapiens (Human).